A 484-amino-acid chain; its full sequence is MIQGTTSDAGKSTLVAGLCRLARRAGVRVAPFKPQNMALNSAVTIDGGEIGRAQALQAVAAGIDAHTDLNPVLLKPTSDRGAQVIIHGKARMNLDARAYHDYKPVAFEAVLASYARLKASYDTIFVEGAGSPAEINLRERDIANMGFAEAVDCPVVLVSDIDRGGVFAHLTGTLACLSDSEQARVRGFVINRFRGDVSLLQPGLDWLEAKTGKPVLGVVPYLHGLTLDAEDMLPRELRAAQASADALRVVVPALPHISNHTDFDALRAHPQVDFHYVRAGSAPPPADLIILPGSKNVQGDLAFLRAQGWDAVLQRHLRYGGRVIGICGGMQMLGREVADPYGVEGPPGTVEGLGWLDFSTTLTRDKTLKNVTGRLATDAGRIAGYEIHMGETQGPALDAPALLLADEMGGVRPDGARSADGQILATYVHGLFDTPAACASLLAWAGLKNADAIDYPALREASLERLADTLAVHLDLKRFWEAIG.

A GATase cobBQ-type domain is found at 246–437 (ALRVVVPALP…VHGLFDTPAA (192 aa)). The active-site Nucleophile is Cys327. Residue His429 is part of the active site.

Belongs to the CobB/CobQ family. CobQ subfamily.

The protein operates within cofactor biosynthesis; adenosylcobalamin biosynthesis. Catalyzes amidations at positions B, D, E, and G on adenosylcobyrinic A,C-diamide. NH(2) groups are provided by glutamine, and one molecule of ATP is hydrogenolyzed for each amidation. The protein is Cobyric acid synthase of Paraburkholderia phymatum (strain DSM 17167 / CIP 108236 / LMG 21445 / STM815) (Burkholderia phymatum).